Consider the following 372-residue polypeptide: uncharacterized protein (372 aa).

The chain crosses the membrane as a helical span at residues Gly-224–Ile-244. Ser-329 carries the post-translational modification Phosphoserine.

It localises to the vacuole membrane. This is an uncharacterized protein from Saccharomyces cerevisiae (strain ATCC 204508 / S288c) (Baker's yeast).